A 282-amino-acid polypeptide reads, in one-letter code: Bis(5'-nucleosyl)-tetraphosphatase, symmetrical (282 aa).

The protein belongs to the Ap4A hydrolase family.

The catalysed reaction is P(1),P(4)-bis(5'-adenosyl) tetraphosphate + H2O = 2 ADP + 2 H(+). Hydrolyzes diadenosine 5',5'''-P1,P4-tetraphosphate to yield ADP. The polypeptide is Bis(5'-nucleosyl)-tetraphosphatase, symmetrical (Shigella dysenteriae serotype 1 (strain Sd197)).